The chain runs to 1216 residues: 1-phosphatidylinositol 4,5-bisphosphate phosphodiesterase beta-1 (1216 aa).

The S-palmitoyl cysteine moiety is linked to residue Cys-17. Ser-236 is subject to Phosphoserine. The region spanning 316–467 (EDMSQPLSHY…LMYKILVKNK (152 aa)) is the PI-PLC X-box domain. Catalysis depends on residues His-331 and His-378. Ser-417 carries the phosphoserine modification. Residues 469–534 (KSHKSSEGSG…MDEGTAGSEA (66 aa)) are disordered. The segment covering 472 to 483 (KSSEGSGKKKLS) has biased composition (basic and acidic residues). Residues 491 to 501 (SDSSSVFEPSS) show a composition bias toward low complexity. A compositionally biased stretch (acidic residues) spans 507–518 (ADTESDDDDDDD). Thr-509 is subject to Phosphothreonine. Residues Ser-511 and Ser-582 each carry the phosphoserine modification. The region spanning 540 to 656 (MSNLVNYIQP…GYRLKPEFMR (117 aa)) is the PI-PLC Y-box domain. One can recognise a C2 domain in the interval 656–786 (RRPDKHFDPF…RNERNQPLTL (131 aa)). Disordered stretches follow at residues 834-891 (DEEE…VKAP), 967-989 (EKSAKKDSKKKSEPSSPDHGSSA), 1072-1095 (MDKKRQEKITEAKSKDKSQMEEEK), and 1173-1216 (ISED…DTPL). The segment covering 846 to 868 (ETSSEAPSETRTTPAENGVNHTA) has biased composition (polar residues). At Ser-887 the chain carries Phosphoserine; by PKC. A compositionally biased stretch (basic and acidic residues) spans 967 to 979 (EKSAKKDSKKKSE). Residues Ser-978 and Ser-987 each carry the phosphoserine modification. Residues 1075-1095 (KRQEKITEAKSKDKSQMEEEK) are compositionally biased toward basic and acidic residues. Residues Ser-1197, Ser-1199, and Ser-1200 each carry the phosphoserine modification. Residues 1205–1216 (RENPGREFDTPL) show a composition bias toward basic and acidic residues.

In terms of assembly, interacts with DGKQ. Ca(2+) is required as a cofactor. Palmitoylated. Palmitoylation at Cys-17 by ZDHHC21 regulates the signaling activity of PLCB1 and the function of the endothelial barrier. Palmitoylation by ZDHHC21 is stimulated by inflammation.

Its subcellular location is the nucleus membrane. It localises to the cytoplasm. The enzyme catalyses a 1,2-diacyl-sn-glycero-3-phospho-(1D-myo-inositol-4,5-bisphosphate) + H2O = 1D-myo-inositol 1,4,5-trisphosphate + a 1,2-diacyl-sn-glycerol + H(+). The catalysed reaction is a 1,2-diacyl-sn-glycero-3-phospho-(1D-myo-inositol) + H2O = 1D-myo-inositol 1-phosphate + a 1,2-diacyl-sn-glycerol + H(+). Its function is as follows. Catalyzes the hydrolysis of 1-phosphatidylinositol 4,5-bisphosphate into diacylglycerol (DAG) and inositol 1,4,5-trisphosphate (IP3) and mediates intracellular signaling downstream of G protein-coupled receptors. Regulates the function of the endothelial barrier. The chain is 1-phosphatidylinositol 4,5-bisphosphate phosphodiesterase beta-1 from Mus musculus (Mouse).